The following is a 422-amino-acid chain: Histidine--tRNA ligase (422 aa).

The protein belongs to the class-II aminoacyl-tRNA synthetase family. In terms of assembly, homodimer.

It localises to the cytoplasm. It catalyses the reaction tRNA(His) + L-histidine + ATP = L-histidyl-tRNA(His) + AMP + diphosphate + H(+). The chain is Histidine--tRNA ligase from Nocardia farcinica (strain IFM 10152).